Reading from the N-terminus, the 234-residue chain is HTH-type transcriptional regulator ArcR (234 aa).

A nucleoside 3',5'-cyclic phosphate is bound at residue 40–129 (VRHYTKGQVI…MAFLCKANDD (90 aa)). Residues 155-228 (KFAKDRIIKL…HKNWLVSKHL (74 aa)) enclose the HTH crp-type domain. The segment at residues 188–207 (IQLMSDMAGISRETAGHIIH) is a DNA-binding region (H-T-H motif).

The protein localises to the cytoplasm. Functionally, positively regulates the expression of the arcABDCR operon under anaerobic conditions, thus playing an essential role in arginine catabolism. May also control the expression of genes encoding proteins which are involved in anaerobic metabolism. Can bind cyclic AMP. This is HTH-type transcriptional regulator ArcR (arcR) from Staphylococcus aureus (strain Mu50 / ATCC 700699).